The chain runs to 468 residues: ATP synthase subunit beta (468 aa).

ATP is bound at residue 155 to 162 (GGAGVGKT).

It belongs to the ATPase alpha/beta chains family. In terms of assembly, F-type ATPases have 2 components, CF(1) - the catalytic core - and CF(0) - the membrane proton channel. CF(1) has five subunits: alpha(3), beta(3), gamma(1), delta(1), epsilon(1). CF(0) has three main subunits: a(1), b(2) and c(9-12). The alpha and beta chains form an alternating ring which encloses part of the gamma chain. CF(1) is attached to CF(0) by a central stalk formed by the gamma and epsilon chains, while a peripheral stalk is formed by the delta and b chains.

The protein localises to the cell membrane. The enzyme catalyses ATP + H2O + 4 H(+)(in) = ADP + phosphate + 5 H(+)(out). In terms of biological role, produces ATP from ADP in the presence of a proton gradient across the membrane. The catalytic sites are hosted primarily by the beta subunits. The polypeptide is ATP synthase subunit beta (Streptococcus pneumoniae (strain ATCC BAA-255 / R6)).